A 2103-amino-acid chain; its full sequence is Orsellinic acid synthase (2103 aa).

The interval 17 to 232 is N-terminal acylcarrier protein transacylase domain (SAT); that stretch reads DAVHDLNVRS…KRPELAHATI (216 aa). The Ketosynthase family 3 (KS3) domain occupies 348–782; the sequence is ADAIAVVGMS…GGNVSMLLQD (435 aa). Catalysis depends on for beta-ketoacyl synthase activity residues C525, H660, and H702. The malonyl-CoA:ACP transacylase (MAT) domain stretch occupies residues 881 to 1197; that stretch reads VFTFTGQGAQ…RRGGDDWQSV (317 aa). S973 serves as the catalytic For acyl/malonyl transferase activity. The interval 1272–1409 is N-terminal hotdog fold; it reads HAVEKLQREE…GQPDSAVRRD (138 aa). Positions 1272–1582 constitute a PKS/mFAS DH domain; sequence HAVEKLQREE…FKKLERDFFA (311 aa). The segment at 1303-1579 is product template (PT) domain; the sequence is GHVVDESAIC…DICFKKLERD (277 aa). Residue H1304 is the Proton acceptor; for dehydratase activity of the active site. The C-terminal hotdog fold stretch occupies residues 1433–1582; sequence VHAMDTALFY…FKKLERDFFA (150 aa). The Proton donor; for dehydratase activity role is filled by D1493. The interval 1592 to 1638 is disordered; that stretch reads STKPVAAAPAKSMAKRARQLAPSPSPSSSSGSNTPMSRSPTPSSVSD. 2 stretches are compositionally biased toward low complexity: residues 1594–1603 and 1617–1631; these read KPVAAAPAKS and PSSS…SRSP. 2 Carrier domains span residues 1640 to 1716 and 1741 to 1815; these read VDLG…GGSA and PAPS…DDDA. At S1676 the chain carries O-(pantetheine 4'-phosphoryl)serine. The interval 1722–1743 is disordered; sequence EDITKPTPSPEQTQARKQGPAP. Residue S1775 is modified to O-(pantetheine 4'-phosphoryl)serine. The interval 1809–1838 is disordered; it reads EALDDDAEEESAPAQTSTNPAKETTIDSSR. Residues 1810-1819 show a composition bias toward acidic residues; that stretch reads ALDDDAEEES. Residues 1823–1836 show a composition bias toward polar residues; sequence QTSTNPAKETTIDS. Residues 1849-2082 form a thioesterase (TE) domain region; it reads ASYIHLKALP…TVNGDHFSMM (234 aa).

The catalysed reaction is 3 malonyl-CoA + acetyl-CoA + 2 H(+) = orsellinate + 3 CO2 + 4 CoA. It functions in the pathway secondary metabolite biosynthesis. Functionally, non-reducing polyketide synthase; part of the gene cluster that mediates the biosynthesis of orsellinic acid, as well as of the cathepsin K inhibitors F9775 A and F9775 B. The non-reducing polyketide synthase orsA produces orsellinic acid by condensing acetyl-CoA with 3 malonyl-CoA units. Further modifications by the decarboxylase orsB and the tyrosinase-like protein orsC lead to the production of F9775 A and F9775 B. The functions of orsD and orsE remain unclear since only orsB and orsC are required to convert orsellinic acid into F9775 A and F9775 B. The chain is Orsellinic acid synthase from Emericella nidulans (strain FGSC A4 / ATCC 38163 / CBS 112.46 / NRRL 194 / M139) (Aspergillus nidulans).